We begin with the raw amino-acid sequence, 97 residues long: Aspartyl/glutamyl-tRNA(Asn/Gln) amidotransferase subunit C (97 aa).

This sequence belongs to the GatC family. As to quaternary structure, heterotrimer of A, B and C subunits.

The enzyme catalyses L-glutamyl-tRNA(Gln) + L-glutamine + ATP + H2O = L-glutaminyl-tRNA(Gln) + L-glutamate + ADP + phosphate + H(+). The catalysed reaction is L-aspartyl-tRNA(Asn) + L-glutamine + ATP + H2O = L-asparaginyl-tRNA(Asn) + L-glutamate + ADP + phosphate + 2 H(+). Its function is as follows. Allows the formation of correctly charged Asn-tRNA(Asn) or Gln-tRNA(Gln) through the transamidation of misacylated Asp-tRNA(Asn) or Glu-tRNA(Gln) in organisms which lack either or both of asparaginyl-tRNA or glutaminyl-tRNA synthetases. The reaction takes place in the presence of glutamine and ATP through an activated phospho-Asp-tRNA(Asn) or phospho-Glu-tRNA(Gln). The sequence is that of Aspartyl/glutamyl-tRNA(Asn/Gln) amidotransferase subunit C from Synechococcus sp. (strain CC9311).